The sequence spans 111 residues: Cytochrome c6-like (111 aa).

The N-terminal stretch at 1-25 is a signal peptide; sequence MQKFLKLVLVTFLFLISTLTPPANA. Positions 39, 42, 43, and 83 each coordinate heme c.

The protein belongs to the cytochrome c family. PetJ subfamily. In terms of processing, binds 1 heme c group covalently per subunit.

The protein localises to the cellular thylakoid lumen. The sequence is that of Cytochrome c6-like from Nostoc sp. (strain PCC 7120 / SAG 25.82 / UTEX 2576).